The chain runs to 522 residues: ARS-binding protein 1 (522 aa).

Positions 70 to 144 constitute an HTH CENPB-type domain; it reads DVKRNRPPKY…RKRHILHAIN (75 aa). T460 is modified (phosphothreonine).

In terms of assembly, interacts with mcm10.

The protein resides in the nucleus. Binds, preferentially, to the Maundrell ARS consensus sequence within ARS3002. This chain is ARS-binding protein 1 (abp1), found in Schizosaccharomyces pombe (strain 972 / ATCC 24843) (Fission yeast).